We begin with the raw amino-acid sequence, 209 residues long: 8-oxoguanine DNA glycosylase/AP lyase (209 aa).

Active-site residues include Lys131 and Asp149.

The protein belongs to the type-2 OGG1 family.

The catalysed reaction is 2'-deoxyribonucleotide-(2'-deoxyribose 5'-phosphate)-2'-deoxyribonucleotide-DNA = a 3'-end 2'-deoxyribonucleotide-(2,3-dehydro-2,3-deoxyribose 5'-phosphate)-DNA + a 5'-end 5'-phospho-2'-deoxyribonucleoside-DNA + H(+). Catalyzes the excision of an oxidatively damaged form of guanine (7,8-dihydro-8-oxoguanine = 8-oxoG) from DNA. Also cleaves the DNA backbone at apurinic/apyrimidinic sites (AP sites). This is 8-oxoguanine DNA glycosylase/AP lyase from Korarchaeum cryptofilum (strain OPF8).